A 140-amino-acid polypeptide reads, in one-letter code: Nucleoside diphosphate kinase (140 aa).

Residues Lys-9, Phe-57, Arg-85, Thr-91, Arg-102, and Asn-112 each contribute to the ATP site. His-115 (pros-phosphohistidine intermediate) is an active-site residue.

Belongs to the NDK family. As to quaternary structure, homotetramer. The cofactor is Mg(2+).

The protein localises to the cytoplasm. It carries out the reaction a 2'-deoxyribonucleoside 5'-diphosphate + ATP = a 2'-deoxyribonucleoside 5'-triphosphate + ADP. The catalysed reaction is a ribonucleoside 5'-diphosphate + ATP = a ribonucleoside 5'-triphosphate + ADP. In terms of biological role, major role in the synthesis of nucleoside triphosphates other than ATP. The ATP gamma phosphate is transferred to the NDP beta phosphate via a ping-pong mechanism, using a phosphorylated active-site intermediate. This is Nucleoside diphosphate kinase from Chlorobium limicola (strain DSM 245 / NBRC 103803 / 6330).